We begin with the raw amino-acid sequence, 286 residues long: Bifunctional protein FolD (286 aa).

NADP(+) is bound by residues 165 to 167 and Ser-190; that span reads GRS.

Belongs to the tetrahydrofolate dehydrogenase/cyclohydrolase family. In terms of assembly, homodimer.

It catalyses the reaction (6R)-5,10-methylene-5,6,7,8-tetrahydrofolate + NADP(+) = (6R)-5,10-methenyltetrahydrofolate + NADPH. The enzyme catalyses (6R)-5,10-methenyltetrahydrofolate + H2O = (6R)-10-formyltetrahydrofolate + H(+). The protein operates within one-carbon metabolism; tetrahydrofolate interconversion. Catalyzes the oxidation of 5,10-methylenetetrahydrofolate to 5,10-methenyltetrahydrofolate and then the hydrolysis of 5,10-methenyltetrahydrofolate to 10-formyltetrahydrofolate. In Burkholderia orbicola (strain MC0-3), this protein is Bifunctional protein FolD.